The following is a 34-amino-acid chain: Papillosin (34 aa).

In terms of biological role, has strong antibacterial activity against the Gram-positive bacteria M.luteus, S.aureus, B.megaterium, A.viridans and E.faecalis, and against the Gram-negative bacteria K.pneumoniae, E.coli DH5alpha, S.typhimurium, P.aeruginosa and E.aerogenes. Lacks hemolytic activity against sheep erythrocytes. The protein is Papillosin of Halocynthia papillosa (Red sea-squirt).